We begin with the raw amino-acid sequence, 644 residues long: Exoribonuclease 2 (644 aa).

The RNB domain maps to 189-516; it reads RQDLTALNFV…NHRLLKAVIK (328 aa). One can recognise an S1 motif domain in the interval 561–643; that stretch reads NTRFAAEIID…ETRSIIARPA (83 aa).

It belongs to the RNR ribonuclease family. RNase II subfamily.

The protein localises to the cytoplasm. It carries out the reaction Exonucleolytic cleavage in the 3'- to 5'-direction to yield nucleoside 5'-phosphates.. In terms of biological role, involved in mRNA degradation. Hydrolyzes single-stranded polyribonucleotides processively in the 3' to 5' direction. In Salmonella gallinarum (strain 287/91 / NCTC 13346), this protein is Exoribonuclease 2.